The primary structure comprises 209 residues: MTIKVLFVDDHEMVRIGISSYLSTQSDIEVVGEGASGKEAIAKAHELKPDLILMDLLMDDMDGVEATTQIKKDLPQIKVLMLTSFIEDKEVYRALDAGVDSYILKTTSAKDIADAVRKTSRGESVFEPEVLVKMRNRMKKRAELYEMLTEREMEILLLIAKGYSNQEIASASHITIKTVKTHVSNILSKLEVQDRTQAVIYAFQHNLIQ.

Residues 4–120 enclose the Response regulatory domain; sequence KVLFVDDHEM…DIADAVRKTS (117 aa). Asp-55 carries the 4-aspartylphosphate modification. The region spanning 141–206 is the HTH luxR-type domain; that stretch reads RAELYEMLTE…QAVIYAFQHN (66 aa). A DNA-binding region (H-T-H motif) is located at residues 165-184; sequence NQEIASASHITIKTVKTHVS.

Homodimer. Post-translationally, phosphorylated by VraS. Phosphorylation state of VraR controls dimerization of the protein.

Functionally, member of the two-component regulatory system VraS/VraR involved in the control of the cell wall peptidoglycan biosynthesis. Upon cellular stress, the histidine kinase VraS transfers the phosphoryl group onto VraR. Upon phosphorylation, VraR dimerizes at the N-terminal domain. In turn, phosphorylation-induced dimerization expand and enhance the VraR binding to its own promoter leading to increased expression and subsequent modulation of as many as 40 genes, which ultimately constitute the S.aureus response to cell wall damage. In addition, inhibits the host autophagic flux and delays the early stage of autophagosome formation, thereby promoting bacterial survival. Facilitates the ability of S.aureus to resist host polymorphonuclear leukocytes-mediated phagocytosis and killing thus contributing to immune evasion. The polypeptide is Response regulator protein VraR (vraR) (Staphylococcus aureus (strain NCTC 8325 / PS 47)).